Consider the following 151-residue polypeptide: Large ribosomal subunit protein bL9 (151 aa).

Belongs to the bacterial ribosomal protein bL9 family.

Its function is as follows. Binds to the 23S rRNA. This chain is Large ribosomal subunit protein bL9, found in Chlorobium phaeobacteroides (strain DSM 266 / SMG 266 / 2430).